The sequence spans 194 residues: Ribonuclease HII (194 aa).

One can recognise an RNase H type-2 domain in the interval 3-193; it reads ILTAGVDEAG…VRNLFAQQAL (191 aa). The a divalent metal cation site is built by aspartate 9, glutamate 10, and aspartate 101.

This sequence belongs to the RNase HII family. Requires Mn(2+) as cofactor. Mg(2+) is required as a cofactor.

It localises to the cytoplasm. It carries out the reaction Endonucleolytic cleavage to 5'-phosphomonoester.. Endonuclease that specifically degrades the RNA of RNA-DNA hybrids. The polypeptide is Ribonuclease HII (Neisseria meningitidis serogroup C / serotype 2a (strain ATCC 700532 / DSM 15464 / FAM18)).